The following is a 323-amino-acid chain: Aldo-keto reductase family 1 member C3 (323 aa).

NADP(+) contacts are provided by residues 23–24 (TY) and Asp50. Tyr55 serves as the catalytic Proton donor. Position 117 (His117) interacts with substrate. NADP(+) contacts are provided by residues 166–167 (SN), Gln190, 216–222 (YSALGSQ), 270–272 (KSY), and 276–280 (RIRQN).

This sequence belongs to the aldo/keto reductase family. In terms of tissue distribution, expressed in many tissues including adrenal gland, brain, kidney, liver, lung, mammary gland, placenta, small intestine, colon, spleen, prostate and testis. High expression in prostate and mammary gland. In the prostate, higher levels in epithelial cells than in stromal cells. In the brain, expressed in medulla, spinal cord, frontotemporal lobes, thalamus, subthalamic nuclei and amygdala. Weaker expression in the hippocampus, substantia nigra and caudate.

The protein resides in the cytoplasm. It carries out the reaction a 3alpha-hydroxysteroid + NADP(+) = a 3-oxosteroid + NADPH + H(+). The enzyme catalyses a 3alpha-hydroxysteroid + NAD(+) = a 3-oxosteroid + NADH + H(+). It catalyses the reaction prostaglandin F2alpha + NADP(+) = prostaglandin D2 + NADPH + H(+). The catalysed reaction is prostaglandin F2alpha + NADP(+) = prostaglandin H2 + NADPH + H(+). It carries out the reaction prostaglandin D2 + NADPH + H(+) = 11beta-prostaglandin F2 + NADP(+). The enzyme catalyses prostaglandin D2-ethanolamide + NADPH + H(+) = 11beta-prostaglandin F2-ethanolamide + NADP(+). It catalyses the reaction testosterone + NAD(+) = androst-4-ene-3,17-dione + NADH + H(+). The catalysed reaction is testosterone + NADP(+) = androst-4-ene-3,17-dione + NADPH + H(+). It carries out the reaction 17beta-estradiol + NADP(+) = estrone + NADPH + H(+). The enzyme catalyses 17beta-estradiol + NAD(+) = estrone + NADH + H(+). It catalyses the reaction (20S)-hydroxypregn-4-en-3-one + NADP(+) = progesterone + NADPH + H(+). The catalysed reaction is (20S)-hydroxypregn-4-en-3-one + NAD(+) = progesterone + NADH + H(+). It carries out the reaction 5alpha-androstane-3alpha,17beta-diol + NADP(+) = 17beta-hydroxy-5alpha-androstan-3-one + NADPH + H(+). The enzyme catalyses 5alpha-androstane-3alpha,17beta-diol + NAD(+) = 17beta-hydroxy-5alpha-androstan-3-one + NADH + H(+). It catalyses the reaction androsterone + NADPH + H(+) = 5alpha-androstane-3alpha,17beta-diol + NADP(+). The catalysed reaction is 5alpha-androstane-3alpha,17beta-diol + NAD(+) = androsterone + NADH + H(+). It carries out the reaction 5alpha-androstane-3beta,17beta-diol + NADP(+) = 17beta-hydroxy-5alpha-androstan-3-one + NADPH + H(+). The enzyme catalyses 9-cis-retinol + NADP(+) = 9-cis-retinal + NADPH + H(+). It functions in the pathway steroid metabolism. Its activity is regulated as follows. Strongly inhibited by nonsteroidal anti-inflammatory drugs (NSAID) including flufenamic acid and indomethacin. Also inhibited by the flavinoid, rutin, and by selective serotonin inhibitors (SSRIs). The oxidation reaction is inhibited by low micromolar concentrations of NADPH. Cytosolic aldo-keto reductase that catalyzes the NADH and NADPH-dependent reduction of ketosteroids to hydroxysteroids. Acts as a NAD(P)(H)-dependent 3-, 17- and 20-ketosteroid reductase on the steroid nucleus and side chain and regulates the metabolism of androgens, estrogens and progesterone. Displays the ability to catalyze both oxidation and reduction in vitro, but most probably acts as a reductase in vivo since the oxidase activity measured in vitro is inhibited by physiological concentration of NADPH. Acts preferentially as a 17-ketosteroid reductase and has the highest catalytic efficiency of the AKR1C enzyme for the reduction of delta4-androstenedione to form testosterone. Reduces prostaglandin (PG) D2 to 11beta-prostaglandin F2, progesterone to 20alpha-hydroxyprogesterone and estrone to 17beta-estradiol. Catalyzes the transformation of the potent androgen dihydrotestosterone (DHT) into the less active form, 5-alpha-androstan-3-alpha,17-beta-diol (3-alpha-diol). Also displays retinaldehyde reductase activity toward 9-cis-retinal. The protein is Aldo-keto reductase family 1 member C3 (AKR1C3) of Homo sapiens (Human).